We begin with the raw amino-acid sequence, 352 residues long: Thiosulfate transporter TsuA (352 aa).

The chain crosses the membrane as a helical span at residues 1 to 21 (MFSMILSGLICGALLGFVMQR). The Cytoplasmic portion of the chain corresponds to 22–44 (GRFCLTGGFRDMYIVKNNRMFYA). A helical transmembrane segment spans residues 45 to 65 (LLIAISVQSVGVFALIQAGLL). At 66–70 (TYEAG) the chain is on the periplasmic side. The helical transmembrane segment at 71–91 (AFPWLGTVIGGYIFGLGIVLA) threads the bilayer. Over 92–102 (GGCATGTWYRA) the chain is Cytoplasmic. Residues 103-123 (GEGLIGSWIALFTYMVMSAVM) form a helical membrane-spanning segment. The Periplasmic segment spans residues 124-148 (RSPHASGLNQTLQHYSTEHNSIAET). Residues 149-169 (FNLSVWPLVAVLLVITLWVVM) form a helical membrane-spanning segment. Residues 170–197 (KELKKPKLKVATLPPRRTGIAHILFEKR) lie on the Cytoplasmic side of the membrane. A helical transmembrane segment spans residues 198–218 (WHPFVTAVLIGLIALLAWPLS). At 219–247 (EATGRMFGLGITSPTANILQFLVAGDMKY) the chain is on the periplasmic side. A helical transmembrane segment spans residues 248 to 268 (INWGVFLVLGIFVGSFIAAKA). Topologically, residues 269–289 (SREFRVRAADAQTTLRSGLGG) are cytoplasmic. A helical transmembrane segment spans residues 290–310 (VLMGFGASIAGGCSIGNGLVM). The Periplasmic portion of the chain corresponds to 311 to 317 (TAMMTWQ). Residues 318–338 (GWIGLVFMILGVWTASWLVYV) form a helical membrane-spanning segment. The Cytoplasmic portion of the chain corresponds to 339–352 (RPQRKARLATAAAN).

This sequence belongs to the TsuA/YedE (TC 9.B.102) family.

The protein localises to the cell inner membrane. It carries out the reaction thiosulfate(in) = thiosulfate(out). In terms of biological role, mediates thiosulfate uptake. The sequence is that of Thiosulfate transporter TsuA from Escherichia coli (strain K12).